The following is a 156-amino-acid chain: SsrA-binding protein (156 aa).

Belongs to the SmpB family.

It is found in the cytoplasm. Required for rescue of stalled ribosomes mediated by trans-translation. Binds to transfer-messenger RNA (tmRNA), required for stable association of tmRNA with ribosomes. tmRNA and SmpB together mimic tRNA shape, replacing the anticodon stem-loop with SmpB. tmRNA is encoded by the ssrA gene; the 2 termini fold to resemble tRNA(Ala) and it encodes a 'tag peptide', a short internal open reading frame. During trans-translation Ala-aminoacylated tmRNA acts like a tRNA, entering the A-site of stalled ribosomes, displacing the stalled mRNA. The ribosome then switches to translate the ORF on the tmRNA; the nascent peptide is terminated with the 'tag peptide' encoded by the tmRNA and targeted for degradation. The ribosome is freed to recommence translation, which seems to be the essential function of trans-translation. This is SsrA-binding protein from Thermoanaerobacter pseudethanolicus (strain ATCC 33223 / 39E) (Clostridium thermohydrosulfuricum).